Here is a 131-residue protein sequence, read N- to C-terminus: Transcription antitermination protein NusB (131 aa).

The protein belongs to the NusB family.

Its function is as follows. Involved in transcription antitermination. Required for transcription of ribosomal RNA (rRNA) genes. Binds specifically to the boxA antiterminator sequence of the ribosomal RNA (rrn) operons. This Campylobacter fetus subsp. fetus (strain 82-40) protein is Transcription antitermination protein NusB.